The primary structure comprises 163 residues: GYLGGIAAPVGYAAPAVGYAAPAIAAAPVAVAHAVAPAAASVANTYRISQTARVLAAPAAYAAPAVAAAPAIGYAAPAIAAAPALGYARYAAAAPVAVAHAAVPAAASVANTYRISQTARLLAAPAVAHAPVAYAAPAAYAAPAIGYGYGGLAYGAAPVAKVY.

Tandem repeats lie at residues 7-10, 13-16, 20-23, 26-29, 56-59, 62-65, 68-71, 75-78, 81-84, 93-96, 123-126, 135-138, 141-144, and 156-159.

Its function is as follows. Component of the cuticle of migratory locust which contains more than 100 different structural proteins. The protein is Cuticle protein 38 of Locusta migratoria (Migratory locust).